Here is a 519-residue protein sequence, read N- to C-terminus: Sterile alpha motif domain-containing protein 1 (519 aa).

Residues M1–E11 are compositionally biased toward pro residues. 2 disordered regions span residues M1–H30 and Y87–L232. A compositionally biased stretch (low complexity) spans T12–P29. An SAMD1-like winged helix (WH) domain is found at S23–V99. A Phosphothreonine modification is found at T107. Residues P108–V133 are compositionally biased toward pro residues. The segment covering A134–A147 has biased composition (low complexity). The residue at position 150 (S150) is a Phosphoserine. Over residues G157 to L166 the composition is skewed to low complexity. The segment covering A167 to E217 has biased composition (pro residues). The span at G218–V230 shows a compositional bias: low complexity. S242 carries the post-translational modification Phosphoserine. The segment covering E261–R271 has biased composition (basic and acidic residues). Disordered regions lie at residues E261 to C381 and P417 to D439. A compositionally biased stretch (acidic residues) spans K308–V325. Residues W443–D511 enclose the SAM domain.

In terms of assembly, homopolymerize into a closed pentameric ring. Interacts (via SAM domain) with L3MBTL3 (via SAM domain); the interaction mediates L3MBTL3 binding to chromatin. Interacts (via WH domain) with KDM1A; the interaction modulates KDM1A function. In terms of tissue distribution, expressed to similar levels in different organs. Expressed at higher levels in bone marrow, osteoclasts and spleen. Expressed in vascular smooth muscle cells.

It is found in the nucleus. The protein resides in the chromosome. It localises to the secreted. Functionally, unmethylated CpG islands (CGIs)-binding protein which localizes to H3K4me3-decorated CGIs, where it acts as a transcriptional repressor. Tethers L3MBTL3 to chromatin and interacts with the KDM1A histone demethylase complex to modulate H3K4me2 and H3K4me3 levels at CGIs. Plays a role in atherogenesis by binding with LDL on cell surface and promoting LDL oxidation which leads to the formation of foam cell. The sequence is that of Sterile alpha motif domain-containing protein 1 from Mus musculus (Mouse).